The sequence spans 176 residues: Dual-action ribosomal maturation protein DarP (176 aa).

This sequence belongs to the DarP family.

The protein resides in the cytoplasm. In terms of biological role, member of a network of 50S ribosomal subunit biogenesis factors which assembles along the 30S-50S interface, preventing incorrect 23S rRNA structures from forming. Promotes peptidyl transferase center (PTC) maturation. In Actinobacillus pleuropneumoniae serotype 5b (strain L20), this protein is Dual-action ribosomal maturation protein DarP.